Consider the following 200-residue polypeptide: Lipopolysaccharide core heptose(II)-phosphate phosphatase (200 aa).

The signal sequence occupies residues 1–25 (MLAFCRSSLKSKKYFIILLALAAIA).

It belongs to the phosphoglycerate mutase family. Ais subfamily.

Its subcellular location is the periplasm. The protein operates within bacterial outer membrane biogenesis; lipopolysaccharide metabolism. In terms of biological role, catalyzes the dephosphorylation of heptose(II) of the outer membrane lipopolysaccharide core. The protein is Lipopolysaccharide core heptose(II)-phosphate phosphatase of Escherichia coli O6:K15:H31 (strain 536 / UPEC).